We begin with the raw amino-acid sequence, 566 residues long: Endoglucanase G (566 aa).

The signal sequence occupies residues 1-30 (MKKAKAIFSLVVALMVLAIFCFAQNTGSTA). The active-site Proton donor is Glu226. Glu381 serves as the catalytic Nucleophile. The tract at residues 473 to 494 (GTPQASDPPATPTATPTKPAAS) is disordered. Low complexity predominate over residues 474-494 (TPQASDPPATPTATPTKPAAS). The 68-residue stretch at 497 to 564 (PSFIYGDINS…LLRSIDKLPH (68 aa)) folds into the Dockerin domain.

This sequence belongs to the glycosyl hydrolase 5 (cellulase A) family.

The catalysed reaction is Endohydrolysis of (1-&gt;4)-beta-D-glucosidic linkages in cellulose, lichenin and cereal beta-D-glucans.. Functionally, this enzyme catalyzes the endohydrolysis of 1,4-beta-glucosidic linkages in cellulose, lichenin and cereal beta-D-glucans. This chain is Endoglucanase G (celG), found in Acetivibrio thermocellus (strain ATCC 27405 / DSM 1237 / JCM 9322 / NBRC 103400 / NCIMB 10682 / NRRL B-4536 / VPI 7372) (Clostridium thermocellum).